The sequence spans 377 residues: tRNA N6-adenosine threonylcarbamoyltransferase (377 aa).

The Fe cation site is built by histidine 129 and histidine 133. Residues leucine 151–glycine 155, aspartate 184, glycine 197, and asparagine 298 contribute to the substrate site. Aspartate 326 contributes to the Fe cation binding site. A disordered region spans residues aspartate 358–alanine 377.

This sequence belongs to the KAE1 / TsaD family. It depends on Fe(2+) as a cofactor.

It is found in the cytoplasm. It catalyses the reaction L-threonylcarbamoyladenylate + adenosine(37) in tRNA = N(6)-L-threonylcarbamoyladenosine(37) in tRNA + AMP + H(+). Required for the formation of a threonylcarbamoyl group on adenosine at position 37 (t(6)A37) in tRNAs that read codons beginning with adenine. Is involved in the transfer of the threonylcarbamoyl moiety of threonylcarbamoyl-AMP (TC-AMP) to the N6 group of A37, together with TsaE and TsaB. TsaD likely plays a direct catalytic role in this reaction. The sequence is that of tRNA N6-adenosine threonylcarbamoyltransferase from Maricaulis maris (strain MCS10) (Caulobacter maris).